We begin with the raw amino-acid sequence, 238 residues long: Probable transcriptional regulatory protein IL0164 (238 aa).

It belongs to the TACO1 family.

Its subcellular location is the cytoplasm. This chain is Probable transcriptional regulatory protein IL0164, found in Idiomarina loihiensis (strain ATCC BAA-735 / DSM 15497 / L2-TR).